The following is a 332-amino-acid chain: Probable electron transfer flavoprotein subunit alpha, mitochondrial (332 aa).

Residue 275-303 (LYIAIGISGAIQHLAGMKDSKVIVAINKD) participates in FAD binding.

Belongs to the ETF alpha-subunit/FixB family. In terms of assembly, heterodimer of an alpha and a beta subunit. FAD serves as cofactor.

It localises to the mitochondrion matrix. Functionally, the electron transfer flavoprotein serves as a specific electron acceptor for several dehydrogenases, including five acyl-CoA dehydrogenases, glutaryl-CoA and sarcosine dehydrogenase. It transfers the electrons to the main mitochondrial respiratory chain via ETF-ubiquinone oxidoreductase (ETF dehydrogenase). In Caenorhabditis elegans, this protein is Probable electron transfer flavoprotein subunit alpha, mitochondrial.